Here is a 402-residue protein sequence, read N- to C-terminus: Putative neuropeptide Y receptor 11 (402 aa).

Residues 1–45 (MGSVNESCDNYVEIFNKINYFFRDDQVINGTEYSPKEFGYFITFA) are Extracellular-facing. 2 N-linked (GlcNAc...) asparagine glycosylation sites follow: Asn5 and Asn29. A helical transmembrane segment spans residues 46-66 (YMLIILFGAIGNFLTIIVVIL). At 67-85 (NPAMRTTRNFFILNLALSD) the chain is on the cytoplasmic side. A helical transmembrane segment spans residues 86 to 106 (FFVCIVTAPTTLYTVLYMFWP). At 107–122 (FSRTLCKIAGSLQGFN) the chain is on the extracellular side. An intrachain disulfide couples Cys112 to Cys194. Residues 123–143 (IFLSTFSIASIAVDRYVLIIF) form a helical membrane-spanning segment. Residues 144-152 (PTKRERQQN) lie on the Cytoplasmic side of the membrane. A helical transmembrane segment spans residues 153–173 (LSFCFFIMIWVISLILAVPLL). Topologically, residues 174-210 (QASDLTPVFVEPSCDLALYICHEQNEIWEKMIISKGT) are extracellular. Residues 211-231 (YTLAVLITQYAFPLFSLVFAY) traverse the membrane as a helical segment. The Cytoplasmic segment spans residues 232-272 (SRIAHRMKLRFANRNQNVTTNTNTSQRRRSVVERQRRTHLL). Residues 273-293 (LVCVVAVFAVAWLPLNVFHIF) traverse the membrane as a helical segment. The Extracellular segment spans residues 294-306 (NTFELVNSFSVTT). The helical transmembrane segment at 307–328 (FSICHCLAMCSACLNPLIYAFF) threads the bilayer. Residues 329–402 (NHNFRIEFMH…LSAMEQDEQL (74 aa)) lie on the Cytoplasmic side of the membrane.

Belongs to the G-protein coupled receptor 1 family.

The protein localises to the cell membrane. Its function is as follows. Could be a receptor for neuropeptide Y and peptide YY. The sequence is that of Putative neuropeptide Y receptor 11 (npr-11) from Caenorhabditis elegans.